Consider the following 196-residue polypeptide: Protein GrpE (196 aa).

A disordered region spans residues 1–24 (MAENERTTENFQPQDPSYAEAATT).

The protein belongs to the GrpE family. In terms of assembly, homodimer.

It is found in the cytoplasm. Its function is as follows. Participates actively in the response to hyperosmotic and heat shock by preventing the aggregation of stress-denatured proteins, in association with DnaK and GrpE. It is the nucleotide exchange factor for DnaK and may function as a thermosensor. Unfolded proteins bind initially to DnaJ; upon interaction with the DnaJ-bound protein, DnaK hydrolyzes its bound ATP, resulting in the formation of a stable complex. GrpE releases ADP from DnaK; ATP binding to DnaK triggers the release of the substrate protein, thus completing the reaction cycle. Several rounds of ATP-dependent interactions between DnaJ, DnaK and GrpE are required for fully efficient folding. This is Protein GrpE from Gloeobacter violaceus (strain ATCC 29082 / PCC 7421).